A 236-amino-acid polypeptide reads, in one-letter code: Small ribosomal subunit protein uS3 (236 aa).

The 69-residue stretch at 39 to 107 (IREVLEKQLK…EVHLNIVEVR (69 aa)) folds into the KH type-2 domain. The disordered stretch occupies residues 214–236 (ASERRALEGGDSGGGRSRRDDRG).

The protein belongs to the universal ribosomal protein uS3 family. Part of the 30S ribosomal subunit. Forms a tight complex with proteins S10 and S14.

Binds the lower part of the 30S subunit head. Binds mRNA in the 70S ribosome, positioning it for translation. The protein is Small ribosomal subunit protein uS3 of Parvibaculum lavamentivorans (strain DS-1 / DSM 13023 / NCIMB 13966).